Here is an 86-residue protein sequence, read N- to C-terminus: Large ribosomal subunit protein bL27 (86 aa).

Residues 1–26 (MATKKAGGSSRNGRDSAGRRLGVKQS) form a disordered region.

It belongs to the bacterial ribosomal protein bL27 family.

The polypeptide is Large ribosomal subunit protein bL27 (Rickettsia canadensis (strain McKiel)).